The sequence spans 414 residues: Phospholipase A1-IIbeta (414 aa).

Lys19 participates in a covalent cross-link: Glycyl lysine isopeptide (Lys-Gly) (interchain with G-Cter in ubiquitin). Positions Asp191–Ile217 form a coiled coil. Ser223 acts as the Acyl-ester intermediate in catalysis. Catalysis depends on charge relay system residues Ser223, Asp289, and His326. The segment at Asp386 to Pro414 is disordered. A coiled-coil region spans residues Lys390 to Asn410. The segment covering Asn392–Glu401 has biased composition (basic and acidic residues).

This sequence belongs to the AB hydrolase superfamily. Lipase family.

Its subcellular location is the cytoplasm. Its function is as follows. Acylhydrolase that catalyzes the hydrolysis of phospholipids at the sn-1 position. This chain is Phospholipase A1-IIbeta, found in Arabidopsis thaliana (Mouse-ear cress).